Consider the following 254-residue polypeptide: Cell division protein ZapD (254 aa).

This sequence belongs to the ZapD family. As to quaternary structure, interacts with FtsZ.

The protein resides in the cytoplasm. Functionally, cell division factor that enhances FtsZ-ring assembly. Directly interacts with FtsZ and promotes bundling of FtsZ protofilaments, with a reduction in FtsZ GTPase activity. This Idiomarina loihiensis (strain ATCC BAA-735 / DSM 15497 / L2-TR) protein is Cell division protein ZapD.